The following is a 634-amino-acid chain: Chaperone protein HtpG (634 aa).

The a; substrate-binding stretch occupies residues methionine 1 to arginine 343. Residues glutamate 344 to arginine 560 form a b region. The segment at isoleucine 561–leucine 634 is c.

Belongs to the heat shock protein 90 family. Homodimer.

It localises to the cytoplasm. Its function is as follows. Molecular chaperone. Has ATPase activity. This chain is Chaperone protein HtpG, found in Methylococcus capsulatus (strain ATCC 33009 / NCIMB 11132 / Bath).